The primary structure comprises 318 residues: MKILLANPRGFCAGVSRAVETVEKVLEVEKSPVYVRHEVVHNKVVVDSLKKKGVVFVKEVDEVPDDAVCIFSAHGVSLQVEEAASKKNLVLYDATCPLVTKVHRGVRLASNNDAECVLIGHKGHPEVQGTMGQYRSEKGAIYLVESEQDVAKLDIKNPDNLYYATQTTLSVDETQGIIESLKNRFPNIKGPKKEDICYATQNRQTAIKSMLKEIDVLVVVGSQNSSNSNRLKELATLEGIDAYLVDNPADIKSTWFENKKVCGVSAGASAPEYLVQQVITEISRVCEGDVVVEEFDGIKEEVYFPLPRLLKQKIIGTN.

Cysteine 12 lines the [4Fe-4S] cluster pocket. Positions 41 and 74 each coordinate (2E)-4-hydroxy-3-methylbut-2-enyl diphosphate. Histidine 41 and histidine 74 together coordinate dimethylallyl diphosphate. 2 residues coordinate isopentenyl diphosphate: histidine 41 and histidine 74. Cysteine 96 contacts [4Fe-4S] cluster. Position 124 (histidine 124) interacts with (2E)-4-hydroxy-3-methylbut-2-enyl diphosphate. Dimethylallyl diphosphate is bound at residue histidine 124. An isopentenyl diphosphate-binding site is contributed by histidine 124. Glutamate 126 acts as the Proton donor in catalysis. Threonine 167 lines the (2E)-4-hydroxy-3-methylbut-2-enyl diphosphate pocket. A [4Fe-4S] cluster-binding site is contributed by cysteine 197. Residues serine 225, serine 226, asparagine 227, and serine 269 each contribute to the (2E)-4-hydroxy-3-methylbut-2-enyl diphosphate site. Residues serine 225, serine 226, asparagine 227, and serine 269 each contribute to the dimethylallyl diphosphate site. Isopentenyl diphosphate contacts are provided by serine 225, serine 226, asparagine 227, and serine 269.

This sequence belongs to the IspH family. [4Fe-4S] cluster is required as a cofactor.

It carries out the reaction isopentenyl diphosphate + 2 oxidized [2Fe-2S]-[ferredoxin] + H2O = (2E)-4-hydroxy-3-methylbut-2-enyl diphosphate + 2 reduced [2Fe-2S]-[ferredoxin] + 2 H(+). The catalysed reaction is dimethylallyl diphosphate + 2 oxidized [2Fe-2S]-[ferredoxin] + H2O = (2E)-4-hydroxy-3-methylbut-2-enyl diphosphate + 2 reduced [2Fe-2S]-[ferredoxin] + 2 H(+). Its pathway is isoprenoid biosynthesis; dimethylallyl diphosphate biosynthesis; dimethylallyl diphosphate from (2E)-4-hydroxy-3-methylbutenyl diphosphate: step 1/1. It functions in the pathway isoprenoid biosynthesis; isopentenyl diphosphate biosynthesis via DXP pathway; isopentenyl diphosphate from 1-deoxy-D-xylulose 5-phosphate: step 6/6. Its function is as follows. Catalyzes the conversion of 1-hydroxy-2-methyl-2-(E)-butenyl 4-diphosphate (HMBPP) into a mixture of isopentenyl diphosphate (IPP) and dimethylallyl diphosphate (DMAPP). Acts in the terminal step of the DOXP/MEP pathway for isoprenoid precursor biosynthesis. In Francisella philomiragia subsp. philomiragia (strain ATCC 25017 / CCUG 19701 / FSC 153 / O#319-036), this protein is 4-hydroxy-3-methylbut-2-enyl diphosphate reductase.